The primary structure comprises 276 residues: Large ribosomal subunit protein uL2 (276 aa).

2 disordered regions span residues 38–59 and 225–276; these read FQKS…GGHK and VMNP…RHKR. A compositionally biased stretch (polar residues) spans 39-49; that stretch reads QKSGRNNNGHI. Residues 50–59 are compositionally biased toward basic residues; it reads TTRHKGGGHK.

It belongs to the universal ribosomal protein uL2 family. In terms of assembly, part of the 50S ribosomal subunit. Forms a bridge to the 30S subunit in the 70S ribosome.

Functionally, one of the primary rRNA binding proteins. Required for association of the 30S and 50S subunits to form the 70S ribosome, for tRNA binding and peptide bond formation. It has been suggested to have peptidyltransferase activity; this is somewhat controversial. Makes several contacts with the 16S rRNA in the 70S ribosome. This chain is Large ribosomal subunit protein uL2, found in Cupriavidus necator (strain ATCC 17699 / DSM 428 / KCTC 22496 / NCIMB 10442 / H16 / Stanier 337) (Ralstonia eutropha).